Consider the following 210-residue polypeptide: MATVKVYDQNKQESGEVTLASDVFEIEVRPEILNLVARAQMAAKRAGTHNVKTRAFVSGGGAKPWKQKGTGRARAGSNRSPIWRGGAITFGPSPRDYTFKVNSKVRSLALKMALSSRLAAESLMVVKGIVLPEAKTKHFAKVADTLGLTKALIVAPEENADLTRSARNIPGLTLTTVDRLSVLEILKHKQLVLLEGAVESVQARFEKKGA.

Positions 57–78 (VSGGGAKPWKQKGTGRARAGSN) are disordered.

It belongs to the universal ribosomal protein uL4 family. Part of the 50S ribosomal subunit.

One of the primary rRNA binding proteins, this protein initially binds near the 5'-end of the 23S rRNA. It is important during the early stages of 50S assembly. It makes multiple contacts with different domains of the 23S rRNA in the assembled 50S subunit and ribosome. In terms of biological role, forms part of the polypeptide exit tunnel. This Desulfovibrio desulfuricans (strain ATCC 27774 / DSM 6949 / MB) protein is Large ribosomal subunit protein uL4.